The following is a 359-amino-acid chain: Outer membrane protein assembly factor BamC (359 aa).

The first 34 residues, 1–34, serve as a signal peptide directing secretion; that stretch reads MASLFDKNSFQMTRLQKTAVAKVVGVSLIMLLAA. Cys-35 carries N-palmitoyl cysteine lipidation. Cys-35 carries the S-diacylglycerol cysteine lipid modification.

It belongs to the BamC family. Part of the Bam complex, which is composed of the outer membrane protein BamA, and four lipoproteins BamB, BamC, BamD and BamE.

The protein localises to the cell outer membrane. Its function is as follows. Part of the outer membrane protein assembly complex, which is involved in assembly and insertion of beta-barrel proteins into the outer membrane. The sequence is that of Outer membrane protein assembly factor BamC from Rahnella sp. (strain Y9602).